Reading from the N-terminus, the 307-residue chain is Fructokinase (307 aa).

Belongs to the carbohydrate kinase PfkB family.

The enzyme catalyses D-fructose + ATP = D-fructose 6-phosphate + ADP + H(+). The protein is Fructokinase (scrK) of Salmonella typhimurium.